Here is a 48-residue protein sequence, read N- to C-terminus: Keratin-associated protein 22-1 (48 aa).

In terms of assembly, interacts with hair keratins.

In the hair cortex, hair keratin intermediate filaments are embedded in an interfilamentous matrix, consisting of hair keratin-associated proteins (KRTAP), which are essential for the formation of a rigid and resistant hair shaft through their extensive disulfide bond cross-linking with abundant cysteine residues of hair keratins. The matrix proteins include the high-sulfur and high-glycine-tyrosine keratins. This is Keratin-associated protein 22-1 (KRTAP22-1) from Homo sapiens (Human).